The following is a 589-amino-acid chain: Protein FAM117B (589 aa).

Positions 1 to 310 (MSQRVRRNGS…RDKERQSPFH (310 aa)) are disordered. A Phosphoserine modification is found at serine 10. Over residues 16–29 (SLGGGAVATAGGPG) the composition is skewed to gly residues. Residues 45–56 (QQQQQQHGSPTR) are compositionally biased toward low complexity. Over residues 57-85 (SGGGGGGNNNGGCCGGASGPAGGGGGGGP) the composition is skewed to gly residues. Position 106 is a phosphoserine (serine 106). The segment covering 108-136 (TVATQTGASATSTRGTSPTRSAAPGARGS) has biased composition (low complexity). A compositionally biased stretch (pro residues) spans 137-146 (PPRPPPPPPL). Composition is skewed to low complexity over residues 147–158 (LGTVSSPSSSPT) and 207–220 (PSSSPSSIIRRTSS). 4 positions are modified to phosphoserine: serine 210, serine 219, serine 220, and serine 273. The segment covering 292–302 (RSKHSSRHHRD) has biased composition (basic residues). Phosphoserine occurs at positions 345 and 391. Disordered stretches follow at residues 370-464 (QDIP…NNSY) and 556-589 (STNTEQDRVSRGTSTVMPSASLLPPPEPIEEAEG). Residues 384–397 (QRSSSTRSIDTQTP) show a composition bias toward polar residues. The segment covering 404-417 (SNNSSRSQSVSPTS) has biased composition (low complexity). A phosphoserine mark is found at serine 449 and serine 457.

This chain is Protein FAM117B (FAM117B), found in Homo sapiens (Human).